The chain runs to 253 residues: Triosephosphate isomerase (253 aa).

Residues Asn12 and Lys14 each contribute to the substrate site. His96 acts as the Electrophile in catalysis. Catalysis depends on Glu169, which acts as the Proton acceptor.

The protein belongs to the triosephosphate isomerase family. Homodimer.

It is found in the cytoplasm. The catalysed reaction is D-glyceraldehyde 3-phosphate = dihydroxyacetone phosphate. It functions in the pathway carbohydrate biosynthesis; gluconeogenesis. It participates in carbohydrate degradation; glycolysis; D-glyceraldehyde 3-phosphate from glycerone phosphate: step 1/1. In terms of biological role, antigen to the host M.1 monoclonal antibody. The polypeptide is Triosephosphate isomerase (TPI) (Schistosoma mansoni (Blood fluke)).